A 355-amino-acid chain; its full sequence is S-adenosylmethionine:tRNA ribosyltransferase-isomerase (355 aa).

This sequence belongs to the QueA family. In terms of assembly, monomer.

The protein resides in the cytoplasm. It catalyses the reaction 7-aminomethyl-7-carbaguanosine(34) in tRNA + S-adenosyl-L-methionine = epoxyqueuosine(34) in tRNA + adenine + L-methionine + 2 H(+). It functions in the pathway tRNA modification; tRNA-queuosine biosynthesis. In terms of biological role, transfers and isomerizes the ribose moiety from AdoMet to the 7-aminomethyl group of 7-deazaguanine (preQ1-tRNA) to give epoxyqueuosine (oQ-tRNA). In Burkholderia lata (strain ATCC 17760 / DSM 23089 / LMG 22485 / NCIMB 9086 / R18194 / 383), this protein is S-adenosylmethionine:tRNA ribosyltransferase-isomerase.